The sequence spans 156 residues: Transcription antitermination protein NusB (156 aa).

This sequence belongs to the NusB family.

Functionally, involved in transcription antitermination. Required for transcription of ribosomal RNA (rRNA) genes. Binds specifically to the boxA antiterminator sequence of the ribosomal RNA (rrn) operons. This is Transcription antitermination protein NusB from Clostridium kluyveri (strain ATCC 8527 / DSM 555 / NBRC 12016 / NCIMB 10680 / K1).